We begin with the raw amino-acid sequence, 219 residues long: Imidazole glycerol phosphate synthase subunit HisH (219 aa).

In terms of domain architecture, Glutamine amidotransferase type-1 spans 4-216 (TVTVLDYGSG…VDSLPATGRN (213 aa)). The active-site Nucleophile is the C82. Residues H191 and E193 contribute to the active site.

In terms of assembly, heterodimer of HisH and HisF.

It localises to the cytoplasm. The catalysed reaction is 5-[(5-phospho-1-deoxy-D-ribulos-1-ylimino)methylamino]-1-(5-phospho-beta-D-ribosyl)imidazole-4-carboxamide + L-glutamine = D-erythro-1-(imidazol-4-yl)glycerol 3-phosphate + 5-amino-1-(5-phospho-beta-D-ribosyl)imidazole-4-carboxamide + L-glutamate + H(+). The enzyme catalyses L-glutamine + H2O = L-glutamate + NH4(+). It participates in amino-acid biosynthesis; L-histidine biosynthesis; L-histidine from 5-phospho-alpha-D-ribose 1-diphosphate: step 5/9. IGPS catalyzes the conversion of PRFAR and glutamine to IGP, AICAR and glutamate. The HisH subunit catalyzes the hydrolysis of glutamine to glutamate and ammonia as part of the synthesis of IGP and AICAR. The resulting ammonia molecule is channeled to the active site of HisF. The chain is Imidazole glycerol phosphate synthase subunit HisH from Renibacterium salmoninarum (strain ATCC 33209 / DSM 20767 / JCM 11484 / NBRC 15589 / NCIMB 2235).